Consider the following 313-residue polypeptide: Solute carrier family 35 member E3 (313 aa).

10 helical membrane passes run 17 to 37 (GLLL…WIYV), 40 to 60 (GFPN…GLYV), 77 to 97 (LLLL…SLQN), 100 to 120 (IGTY…IQTL), 130 to 147 (IRLT…NSYY), 153 to 173 (FLGT…QVWV), 187 to 206 (LLYY…VPFF), 225 to 245 (LMVL…YWII), 252 to 272 (TYNM…YVLF), and 275 to 295 (PLSI…LAYT).

The protein belongs to the TPT transporter family. SLC35E subfamily.

It is found in the membrane. In terms of biological role, putative transporter. The protein is Solute carrier family 35 member E3 (SLC35E3) of Bos taurus (Bovine).